A 330-amino-acid polypeptide reads, in one-letter code: Fructose-1,6-bisphosphatase class 1 (330 aa).

Mg(2+) is bound by residues E84, D103, L105, and D106. Substrate-binding positions include 106–109 (DGSS), N196, and K262. E268 is a binding site for Mg(2+).

Belongs to the FBPase class 1 family. Homotetramer. Mg(2+) is required as a cofactor.

It is found in the cytoplasm. It carries out the reaction beta-D-fructose 1,6-bisphosphate + H2O = beta-D-fructose 6-phosphate + phosphate. It functions in the pathway carbohydrate biosynthesis; gluconeogenesis. This Shewanella frigidimarina (strain NCIMB 400) protein is Fructose-1,6-bisphosphatase class 1.